An 866-amino-acid polypeptide reads, in one-letter code: Sphingomyelin phosphodiesterase 4 (866 aa).

2 positions are modified to phosphoserine: S169 and S285. T708 carries the post-translational modification Phosphothreonine. At S792 the chain carries Phosphoserine. A helical transmembrane segment spans residues 822–842 (LLLAFFVASLFCVGPLPCTLL).

It depends on Mg(2+) as a cofactor. Widely expressed, with highest levels in heart and skeletal muscle. In terms of tissue distribution, expressed in skeletal muscle (at protein level). As to expression, expressed in skeletal muscle but a lower levels than isoform 1 (at protein level).

The protein localises to the endoplasmic reticulum membrane. It localises to the golgi apparatus membrane. Its subcellular location is the nucleus envelope. It is found in the cell membrane. The protein resides in the sarcolemma. It carries out the reaction a sphingomyelin + H2O = phosphocholine + an N-acylsphing-4-enine + H(+). With respect to regulation, activated by phosphatidylserine and tumor necrosis factor (TNF). Inhibited by scyphostatin. Its function is as follows. Catalyzes the hydrolysis of membrane sphingomyelin to form phosphorylcholine and ceramide. It has a relevant role in the homeostasis of membrane sphingolipids, thereby influencing membrane integrity, and endoplasmic reticulum organization and function. May sensitize cells to DNA damage-induced apoptosis. In skeletal muscle, mediates TNF-stimulated oxidant production. In Homo sapiens (Human), this protein is Sphingomyelin phosphodiesterase 4.